The following is a 510-amino-acid chain: uncharacterized protein (510 aa).

This sequence to B.subtilis SpoVR.

This is an uncharacterized protein from Escherichia coli (strain K12).